Consider the following 376-residue polypeptide: Succinyl-diaminopimelate desuccinylase (376 aa).

Histidine 67 is a binding site for Zn(2+). Aspartate 69 is a catalytic residue. Aspartate 100 is a binding site for Zn(2+). Glutamate 134 serves as the catalytic Proton acceptor. The Zn(2+) site is built by glutamate 135, glutamate 163, and histidine 349.

Belongs to the peptidase M20A family. DapE subfamily. In terms of assembly, homodimer. The cofactor is Zn(2+). Requires Co(2+) as cofactor.

It catalyses the reaction N-succinyl-(2S,6S)-2,6-diaminopimelate + H2O = (2S,6S)-2,6-diaminopimelate + succinate. The protein operates within amino-acid biosynthesis; L-lysine biosynthesis via DAP pathway; LL-2,6-diaminopimelate from (S)-tetrahydrodipicolinate (succinylase route): step 3/3. Its function is as follows. Catalyzes the hydrolysis of N-succinyl-L,L-diaminopimelic acid (SDAP), forming succinate and LL-2,6-diaminopimelate (DAP), an intermediate involved in the bacterial biosynthesis of lysine and meso-diaminopimelic acid, an essential component of bacterial cell walls. The protein is Succinyl-diaminopimelate desuccinylase of Proteus mirabilis (strain HI4320).